Reading from the N-terminus, the 273-residue chain is Bifunctional protein FolD (273 aa).

NADP(+) is bound by residues 149 to 151 (GLG) and V215.

This sequence belongs to the tetrahydrofolate dehydrogenase/cyclohydrolase family. As to quaternary structure, homodimer.

The enzyme catalyses (6R)-5,10-methylene-5,6,7,8-tetrahydrofolate + NADP(+) = (6R)-5,10-methenyltetrahydrofolate + NADPH. It carries out the reaction (6R)-5,10-methenyltetrahydrofolate + H2O = (6R)-10-formyltetrahydrofolate + H(+). It functions in the pathway one-carbon metabolism; tetrahydrofolate interconversion. Its function is as follows. Catalyzes the oxidation of 5,10-methylenetetrahydrofolate to 5,10-methenyltetrahydrofolate and then the hydrolysis of 5,10-methenyltetrahydrofolate to 10-formyltetrahydrofolate. The chain is Bifunctional protein FolD from Mycoplasma genitalium (strain ATCC 33530 / DSM 19775 / NCTC 10195 / G37) (Mycoplasmoides genitalium).